A 450-amino-acid chain; its full sequence is Alpha-2B adrenergic receptor (450 aa).

Over 1-12 (MDHQDPYSVQAT) the chain is Extracellular. Residues 13–38 (AAIAAAITFLILFTIFGNALVILAVL) traverse the membrane as a helical segment. Topologically, residues 39-48 (TSRSLRAPQN) are cytoplasmic. A helical membrane pass occupies residues 49 to 69 (LFLVSLAAADILVATLIIPFS). The Extracellular segment spans residues 70-86 (LANELLGYWYFRRTWCE). Residues Cys85 and Cys164 are joined by a disulfide bond. Residues 87–107 (VYLALDVLFCTSSIVHLCAIS) form a helical membrane-spanning segment. Topologically, residues 108-128 (LDRYWAVSRALEYNSKRTPRR) are cytoplasmic. Residues 129 to 149 (IKCIILTVWLIAAVISLPPLI) traverse the membrane as a helical segment. The Extracellular portion of the chain corresponds to 150 to 172 (YKGDQGPQPRGRPQCKLNQEAWY). Residues 173 to 193 (ILASSIGSFFAPCLIMILVYL) traverse the membrane as a helical segment. Topologically, residues 194–368 (RIYLIAKRSN…RRAQLTREKR (175 aa)) are cytoplasmic. Disordered stretches follow at residues 204–229 (RRGP…GGAL) and 241–329 (ASAR…PLQQ). A compositionally biased stretch (basic and acidic residues) spans 246-256 (VNGHSKSTGEK). Acidic residues predominate over residues 293-311 (PEDEAEEEEEEEEEEEECE). Positions 312–326 (PQAVPVSPASACSPP) are enriched in low complexity. A helical membrane pass occupies residues 369–389 (FTFVLAVVIGVFVLCWFPFFF). At 390 to 405 (SYSLGAICPKHCKVPH) the chain is on the extracellular side. Residues 406–426 (GLFQFFFWIGYCNSSLNPVIY) traverse the membrane as a helical segment. Residues 427 to 450 (TIFNQDFRRAFRRILCRPWTQTAW) lie on the Cytoplasmic side of the membrane. Cys442 is lipidated: S-palmitoyl cysteine.

This sequence belongs to the G-protein coupled receptor 1 family. Adrenergic receptor subfamily. ADRA2B sub-subfamily. As to quaternary structure, interacts with RAB26. Interacts with PPP1R9B. Interacts with GGA1, GGA2 and GGA3.

The protein localises to the cell membrane. Alpha-2 adrenergic receptors mediate the catecholamine-induced inhibition of adenylate cyclase through the action of G proteins. The rank order of potency for agonists of this receptor is clonidine &gt; norepinephrine &gt; epinephrine = oxymetazoline &gt; dopamine &gt; p-tyramine = phenylephrine &gt; serotonin &gt; p-synephrine / p-octopamine. For antagonists, the rank order is yohimbine &gt; chlorpromazine &gt; phentolamine &gt; mianserine &gt; spiperone &gt; prazosin &gt; alprenolol &gt; propanolol &gt; pindolol. This chain is Alpha-2B adrenergic receptor (ADRA2B), found in Homo sapiens (Human).